The sequence spans 839 residues: uncharacterized protein (839 aa).

3 disordered regions span residues 504-611, 627-646, and 682-839; these read TVSP…NVVN, KNNN…DNHC, and NHNY…SLGS. A compositionally biased stretch (low complexity) spans 509–611; the sequence is GNNNVTGDVD…EGSNNCNVVN (103 aa). A compositionally biased stretch (basic and acidic residues) spans 636–646; it reads NEYKNSNDNHC. Composition is skewed to low complexity over residues 689 to 704 and 713 to 753; these read NGNN…NNNN and QQQP…NNNK. Positions 726 to 764 form a coiled coil; it reads QQSQQQPQLQQKKQQIQEEQQNLNNNNKSIEDDEEAFNS. A compositionally biased stretch (basic and acidic residues) spans 765 to 776; sequence DDEHDHEDDSIR. Acidic residues predominate over residues 809–823; the sequence is EDNDDDSDISDSDSD.

This is an uncharacterized protein from Dictyostelium discoideum (Social amoeba).